Reading from the N-terminus, the 644-residue chain is Exoribonuclease 2 (644 aa).

One can recognise an RNB domain in the interval 189-516; that stretch reads RQDLTALNFV…NHRLLKAVIK (328 aa). In terms of domain architecture, S1 motif spans 561-643; the sequence is NTRFAAEIID…ETRSIIARPA (83 aa).

This sequence belongs to the RNR ribonuclease family. RNase II subfamily.

It localises to the cytoplasm. The enzyme catalyses Exonucleolytic cleavage in the 3'- to 5'-direction to yield nucleoside 5'-phosphates.. Its function is as follows. Involved in mRNA degradation. Hydrolyzes single-stranded polyribonucleotides processively in the 3' to 5' direction. This Salmonella typhi protein is Exoribonuclease 2.